Here is a 321-residue protein sequence, read N- to C-terminus: D-alanine--D-alanine ligase (321 aa).

Residues 121-315 (RSWFLTNNIN…FVNLIEEILK (195 aa)) form the ATP-grasp domain. Residue 148–199 (IKRPYVIKPFTQGSSIGVEVIFEEDDFNFANYDFPYGDEVIIEKYIKGRELQ) participates in ATP binding. Mg(2+) contacts are provided by glutamate 268, glutamate 282, and asparagine 284.

The protein belongs to the D-alanine--D-alanine ligase family. The cofactor is Mg(2+). Requires Mn(2+) as cofactor.

It is found in the cytoplasm. The enzyme catalyses 2 D-alanine + ATP = D-alanyl-D-alanine + ADP + phosphate + H(+). It participates in cell wall biogenesis; peptidoglycan biosynthesis. Cell wall formation. The protein is D-alanine--D-alanine ligase of Rickettsia bellii (strain RML369-C).